Reading from the N-terminus, the 246-residue chain is Eukaryotic translation initiation factor 6 (246 aa).

Phosphoserine; by CK1 is present on residues Ser-174 and Ser-175.

The protein belongs to the eIF-6 family. As to quaternary structure, monomer. Associates with the 60S ribosomal subunit. In terms of processing, phosphorylation at Ser-174 and Ser-175 promotes nuclear export.

It localises to the cytoplasm. The protein localises to the nucleus. Its subcellular location is the nucleolus. Functionally, binds to the 60S ribosomal subunit and prevents its association with the 40S ribosomal subunit to form the 80S initiation complex in the cytoplasm. Is also involved in ribosome biogenesis. Associates with pre-60S subunits in the nucleus and is involved in its nuclear export. The protein is Eukaryotic translation initiation factor 6 of Verticillium alfalfae (strain VaMs.102 / ATCC MYA-4576 / FGSC 10136) (Verticillium wilt of alfalfa).